Consider the following 341-residue polypeptide: Phosphoribosylformylglycinamidine cyclo-ligase (341 aa).

This sequence belongs to the AIR synthase family.

The protein localises to the cytoplasm. It carries out the reaction 2-formamido-N(1)-(5-O-phospho-beta-D-ribosyl)acetamidine + ATP = 5-amino-1-(5-phospho-beta-D-ribosyl)imidazole + ADP + phosphate + H(+). It functions in the pathway purine metabolism; IMP biosynthesis via de novo pathway; 5-amino-1-(5-phospho-D-ribosyl)imidazole from N(2)-formyl-N(1)-(5-phospho-D-ribosyl)glycinamide: step 2/2. The chain is Phosphoribosylformylglycinamidine cyclo-ligase from Agathobacter rectalis (strain ATCC 33656 / DSM 3377 / JCM 17463 / KCTC 5835 / VPI 0990) (Eubacterium rectale).